We begin with the raw amino-acid sequence, 229 residues long: MLSGGAGSIPELNAQISVCRACPRLVDWREEVAVVKRRAFADQPYWGRPVPGWGSEQPRLLIVGLAPAAHGANRTGRMFTGDRSGDQLYAALHRAGLVNLPISMDAADGLQANQIRITAPVRCAPPGNAPTQAEWVTCSPWLEAEWRLVSEYVRAIVALGGFAWQIVLRLPGVSAMRKPRFSHGVVAQLYAGVRLLGCYHPSQQNMFTGRLTPAMLDDIFRDAKKLAGI.

Positions 19, 22, 123, and 138 each coordinate [4Fe-4S] cluster.

It belongs to the uracil-DNA glycosylase (UDG) superfamily. Type 5 (UDGb) family.

Functionally, DNA glycosylase with broad substrate specificity. This chain is Type-5 uracil-DNA glycosylase, found in Mycobacterium leprae (strain TN).